A 302-amino-acid chain; its full sequence is ICOS ligand (302 aa).

The N-terminal stretch at Met-1–Ala-18 is a signal peptide. The 111-residue stretch at Asp-19 to Glu-129 folds into the Ig-like V-type domain. Residues Asp-19–Thr-256 are Extracellular-facing. A disulfide bond links Cys-37 and Cys-113. N-linked (GlcNAc...) asparagine glycosylation is found at Asn-70, Asn-137, Asn-173, Asn-186, and Asn-225. The Ig-like C2-type domain occupies Pro-141–Thr-227. An intrachain disulfide couples Cys-158 to Cys-216. A helical transmembrane segment spans residues Trp-257–Cys-277. Residues Arg-278 to Val-302 lie on the Cytoplasmic side of the membrane.

Belongs to the immunoglobulin superfamily. BTN/MOG family. As to quaternary structure, interacts with CTLA4 (in vitro). Expressed on peripheral blood B-cells and monocytes, as well as on monocyte-derived dendritic cells (at protein level). As to expression, widely expressed (brain, heart, kidney, liver, lung, pancreas, placenta, skeletal muscle, bone marrow, colon, ovary, prostate, testis, lymph nodes, leukocytes, spleen, thymus and tonsil). In terms of tissue distribution, detected only in lymph nodes, leukocytes and spleen. Expressed on activated monocytes and dendritic cells.

The protein resides in the cell membrane. Functionally, ligand for the T-cell-specific cell surface receptor ICOS. Acts as a costimulatory signal for T-cell proliferation and cytokine secretion. Also induces B-cell proliferation and differentiation into plasma cells. Could play an important role in mediating local tissue responses to inflammatory conditions, as well as in modulating the secondary immune response by co-stimulating memory T-cell function. In endothelial cells, required for proper neutrophil transmigration in response to chemoattractants, such as CXCL8/IL8 or N-formyl-methionyl peptides (fMLP). This is ICOS ligand (ICOSLG) from Homo sapiens (Human).